Consider the following 80-residue polypeptide: Protein Vpu (80 aa).

At 1–7 (MLSLQIL) the chain is on the extracellular side. A helical transmembrane segment spans residues 8–28 (AIVALVVAAIIAIVVWSIVFI). Over 29 to 80 (EYRKILRQRKIDRLIDRIREREEDSGNESEGDQEELAALERGHLAPWDVDDL) the chain is Cytoplasmic. A disordered region spans residues 49–80 (REEDSGNESEGDQEELAALERGHLAPWDVDDL). Phosphoserine; by host CK2 is present on residues serine 53 and serine 57. Over residues 53–65 (SGNESEGDQEELA) the composition is skewed to acidic residues.

This sequence belongs to the HIV-1 VPU protein family. As to quaternary structure, homopentamer. Interacts with host CD4 and BRTC; these interactions induce proteasomal degradation of CD4. Interacts with host BST2; this interaction leads to the degradation of host BST2. Interacts with host FBXW11. Interacts with host AP1M1; this interaction plays a role in the mistrafficking and subsequent degradation of host BST2. Interacts with host RANBP2; this interaction allows Vpu to down-regulate host BLM sumoylation. Post-translationally, phosphorylated by host CK2. This phosphorylation is necessary for interaction with human BTRC and degradation of CD4.

It localises to the host membrane. Ion channel activity is inhibited by hexamethylene amiloride in vitro. Functionally, enhances virion budding by targeting host CD4 and Tetherin/BST2 to proteasome degradation. Degradation of CD4 prevents any unwanted premature interactions between viral Env and its host receptor CD4 in the endoplasmic reticulum. Degradation of antiretroviral protein Tetherin/BST2 is important for virion budding, as BST2 tethers new viral particles to the host cell membrane. Mechanistically, Vpu bridges either CD4 or BST2 to BTRC, a substrate recognition subunit of the Skp1/Cullin/F-box protein E3 ubiquitin ligase, induces their ubiquitination and subsequent proteasomal degradation. The alteration of the E3 ligase specificity by Vpu seems to promote the degradation of host IKBKB, leading to NF-kappa-B down-regulation and subsequent apoptosis. Acts as a viroporin that forms an oligomeric ion channel in membranes. Modulates the host DNA repair mechanisms to promote degradation of nuclear viral cDNA in cells that are already productively infected in order to suppress immune sensing and proviral hyper-integration (superinfection). Manipulates PML-NBs and modulates SUMOylation of host BLM protein thereby enhancing its DNA-end processing activity toward viral unintegrated linear DNA. Also inhibits RAD52-mediated homologous repair of viral cDNA, preventing the generation of dead-end circular forms of single copies of the long terminal repeat and permitting sustained nucleolytic attack. The protein is Protein Vpu of Human immunodeficiency virus type 1 group M subtype B (strain 89.6) (HIV-1).